The following is a 130-amino-acid chain: Small ribosomal subunit protein uS8 (130 aa).

Belongs to the universal ribosomal protein uS8 family. As to quaternary structure, part of the 30S ribosomal subunit. Contacts proteins S5 and S12.

Its function is as follows. One of the primary rRNA binding proteins, it binds directly to 16S rRNA central domain where it helps coordinate assembly of the platform of the 30S subunit. This is Small ribosomal subunit protein uS8 from Photorhabdus laumondii subsp. laumondii (strain DSM 15139 / CIP 105565 / TT01) (Photorhabdus luminescens subsp. laumondii).